The sequence spans 473 residues: MTIPTDNNSSNNKGYNDNNNNNNNNNNNNNNNNNNNNNNNKEHPNINNNNNNNNNNNNNNIKESSSSNSNHSSSQSSSTATVNSNPKVYPYEIIKQVGQGTFGKVYEAKNQDNKRVAIKKVEKSNHFISREYDILKIVAHPNCLRILDMFYTAEDNKKMQNLVFDFIPYTLASLLKKRQLSINFIKVLFYQLCQAIKHIHSKAICHRDITPNNILLSSKGELTLADFGSAKILESNHTSMSYICSRYYRAPELLVGCSNYTTKIDIWSIGCILAEMLIGKPLFPGTNSNDQLGRIIEVLGSPTKDDMEAMKPSKPYHLQLPNINPKFFESLHNVEDKTVVDLLSKIFIFDPVKRASIDEIIAHPFLRDVNINSLELFDEMKCFSVSGNGKSSLTTNSTSSSSTTANMTSLASSSSNNKTTCSETYLSRLPTSAITSSSNLKSIDNSNNGKSSSSSNNIPSLNNSNNGVITNTI.

The interval 1 to 84 (MTIPTDNNSS…QSSSTATVNS (84 aa)) is disordered. Residues 7–84 (NNSSNNKGYN…QSSSTATVNS (78 aa)) are compositionally biased toward low complexity. In terms of domain architecture, Protein kinase spans 91-366 (YEIIKQVGQG…IDEIIAHPFL (276 aa)). Residues 97 to 105 (VGQGTFGKV) and lysine 119 contribute to the ATP site. Aspartate 208 acts as the Proton acceptor in catalysis. Disordered regions lie at residues 389–418 (GKSSLTTNSTSSSSTTANMTSLASSSSNNK) and 437–473 (SSNLKSIDNSNNGKSSSSSNNIPSLNNSNNGVITNTI). Residues 442-466 (SIDNSNNGKSSSSSNNIPSLNNSNN) show a composition bias toward low complexity.

It belongs to the protein kinase superfamily. CMGC Ser/Thr protein kinase family. GSK-3 subfamily.

It catalyses the reaction L-seryl-[tau protein] + ATP = O-phospho-L-seryl-[tau protein] + ADP + H(+). The enzyme catalyses L-threonyl-[tau protein] + ATP = O-phospho-L-threonyl-[tau protein] + ADP + H(+). The protein is Probable serine/threonine-protein kinase glkA (glkA) of Dictyostelium discoideum (Social amoeba).